The sequence spans 276 residues: Ribosomal RNA small subunit methyltransferase I (276 aa).

This sequence belongs to the methyltransferase superfamily. RsmI family.

Its subcellular location is the cytoplasm. It carries out the reaction cytidine(1402) in 16S rRNA + S-adenosyl-L-methionine = 2'-O-methylcytidine(1402) in 16S rRNA + S-adenosyl-L-homocysteine + H(+). In terms of biological role, catalyzes the 2'-O-methylation of the ribose of cytidine 1402 (C1402) in 16S rRNA. The polypeptide is Ribosomal RNA small subunit methyltransferase I (Mycoplasma pneumoniae (strain ATCC 29342 / M129 / Subtype 1) (Mycoplasmoides pneumoniae)).